The chain runs to 271 residues: Phosphatidylglycerol--prolipoprotein diacylglyceryl transferase (271 aa).

Transmembrane regions (helical) follow at residues Trp25–Val45, Tyr60–Tyr80, Phe103–Leu123, Trp134–Gly154, Pro181–Ala201, Gly209–Tyr229, and Gly235–Ile255. Arg152 contacts a 1,2-diacyl-sn-glycero-3-phospho-(1'-sn-glycerol).

It belongs to the Lgt family.

The protein localises to the cell inner membrane. It catalyses the reaction L-cysteinyl-[prolipoprotein] + a 1,2-diacyl-sn-glycero-3-phospho-(1'-sn-glycerol) = an S-1,2-diacyl-sn-glyceryl-L-cysteinyl-[prolipoprotein] + sn-glycerol 1-phosphate + H(+). Its pathway is protein modification; lipoprotein biosynthesis (diacylglyceryl transfer). Its function is as follows. Catalyzes the transfer of the diacylglyceryl group from phosphatidylglycerol to the sulfhydryl group of the N-terminal cysteine of a prolipoprotein, the first step in the formation of mature lipoproteins. This is Phosphatidylglycerol--prolipoprotein diacylglyceryl transferase from Campylobacter jejuni subsp. jejuni serotype O:23/36 (strain 81-176).